Here is a 59-residue protein sequence, read N- to C-terminus: Antitoxin Rv0909 (59 aa).

Its function is as follows. Antitoxin component of a type II toxin-antitoxin (TA) system. Upon expression in M.smegmatis neutralizes the effect of cognate toxin Rv0910. In Mycobacterium tuberculosis (strain ATCC 25618 / H37Rv), this protein is Antitoxin Rv0909.